A 539-amino-acid polypeptide reads, in one-letter code: Carotene epsilon-monooxygenase, chloroplastic (539 aa).

The N-terminal 36 residues, 1–36 (MESSLFSPSSSSYSSLFTAKPTRLLSPKPKFTFSIR), are a transit peptide targeting the chloroplast. Residue cysteine 487 participates in heme binding.

The protein belongs to the cytochrome P450 family. The cofactor is heme.

It is found in the plastid. Its subcellular location is the chloroplast. It carries out the reaction alpha-carotene + reduced [NADPH--hemoprotein reductase] + O2 = alpha-cryptoxanthin + oxidized [NADPH--hemoprotein reductase] + H2O + H(+). It catalyses the reaction zeinoxanthin + reduced [NADPH--hemoprotein reductase] + O2 = lutein + oxidized [NADPH--hemoprotein reductase] + H2O + H(+). Its function is as follows. Heme-containing cytochrome P450 involved in the biosynthesis of xanthophylls. Specific for epsilon- and beta-ring hydroxylation of alpha-carotene. Has only a low activity toward the beta-rings of beta-carotene. The preferred substrate in planta is not alpha-carotene but the epsilon-ring of zeinoxanthin. Possesses a major beta-carotene hydroxylase activity in planta when depleted in its preferred substrate alpha-carotene. This Arabidopsis thaliana (Mouse-ear cress) protein is Carotene epsilon-monooxygenase, chloroplastic (CYP97C1).